We begin with the raw amino-acid sequence, 263 residues long: Tryptophan synthase alpha chain (263 aa).

Residues E47 and D58 each act as proton acceptor in the active site.

The protein belongs to the TrpA family. As to quaternary structure, tetramer of two alpha and two beta chains.

The protein resides in the plastid. It is found in the chloroplast. It carries out the reaction (1S,2R)-1-C-(indol-3-yl)glycerol 3-phosphate + L-serine = D-glyceraldehyde 3-phosphate + L-tryptophan + H2O. The protein operates within amino-acid biosynthesis; L-tryptophan biosynthesis; L-tryptophan from chorismate: step 5/5. In terms of biological role, the alpha subunit is responsible for the aldol cleavage of indoleglycerol phosphate to indole and glyceraldehyde 3-phosphate. The sequence is that of Tryptophan synthase alpha chain from Pyropia yezoensis (Susabi-nori).